Here is a 125-residue protein sequence, read N- to C-terminus: Small ribosomal subunit protein uS13 (125 aa).

Residues 101-125 form a disordered region; sequence QRTKTNARTRKGKRKTVANKKIAAK.

It belongs to the universal ribosomal protein uS13 family. In terms of assembly, part of the 30S ribosomal subunit. Forms a loose heterodimer with protein S19. Forms two bridges to the 50S subunit in the 70S ribosome.

Its function is as follows. Located at the top of the head of the 30S subunit, it contacts several helices of the 16S rRNA. In the 70S ribosome it contacts the 23S rRNA (bridge B1a) and protein L5 of the 50S subunit (bridge B1b), connecting the 2 subunits; these bridges are implicated in subunit movement. Contacts the tRNAs in the A and P-sites. The protein is Small ribosomal subunit protein uS13 of Borrelia duttonii (strain Ly).